The following is a 496-amino-acid chain: Glutathione reductase, cytosolic (496 aa).

Positions 32, 33, 52, 69, 70, and 78 each coordinate FAD. Ser-32 is a binding site for glutathione. The cysteines at positions 70 and 75 are disulfide-linked. Tyr-127 is a binding site for glutathione. Gly-143 lines the FAD pocket. Residues Gly-208, Ile-211, Glu-214, Arg-231, Arg-237, and Gly-294 each contribute to the NADP(+) site. Asp-335 and Thr-343 together coordinate FAD. Ala-373 is a binding site for NADP(+). FAD is bound at residue His-469. The Proton acceptor role is filled by His-469.

This sequence belongs to the class-I pyridine nucleotide-disulfide oxidoreductase family. As to quaternary structure, homodimer. The cofactor is FAD.

The protein localises to the cytoplasm. It carries out the reaction 2 glutathione + NADP(+) = glutathione disulfide + NADPH + H(+). Catalyzes the reduction of glutathione disulfide (GSSG) to reduced glutathione (GSH). Constitutes the major mechanism to maintain a high GSH:GSSG ratio in the cytosol. This Oryza sativa subsp. japonica (Rice) protein is Glutathione reductase, cytosolic (GRC2).